Here is a 39-residue protein sequence, read N- to C-terminus: Photosystem II reaction center protein Psb30 (39 aa).

The helical transmembrane segment at 12–32 threads the bilayer; sequence IFQLTFVGLIMVAGPVVIFLL.

This sequence belongs to the Psb30/Ycf12 family. As to quaternary structure, PSII is composed of 1 copy each of membrane proteins PsbA, PsbB, PsbC, PsbD, PsbE, PsbF, PsbH, PsbI, PsbJ, PsbK, PsbL, PsbM, PsbT, PsbX, PsbY, PsbZ, Psb30/Ycf12, peripheral proteins PsbO, CyanoQ (PsbQ), PsbU, PsbV and a large number of cofactors. It forms dimeric complexes.

The protein resides in the cellular thylakoid membrane. A core subunit of photosystem II (PSII), probably helps stabilize the reaction center. This is Photosystem II reaction center protein Psb30 from Rippkaea orientalis (strain PCC 8801 / RF-1) (Cyanothece sp. (strain PCC 8801)).